Consider the following 193-residue polypeptide: Ion-translocating oxidoreductase complex subunit A (193 aa).

The next 6 membrane-spanning stretches (helical) occupy residues 4 to 24, 39 to 59, 71 to 91, 102 to 122, 134 to 154, and 171 to 191; these read FLLVLLSTALVNNVVLVKFLG, IGMGLATTFVITVASAACWLV, FLRILSMILVIAAIVQFIETV, ALGIYLPLITTNCAVLGLPLM, TLSGFGASVGFTLVLVIFAGM, and PIAFVSAGLLGLAFMGFAGLV.

Belongs to the NqrDE/RnfAE family. In terms of assembly, the complex is composed of six subunits: RnfA, RnfB, RnfC, RnfD, RnfE and RnfG.

It localises to the cellular chromatophore membrane. Part of a membrane-bound complex that couples electron transfer with translocation of ions across the membrane. Required for nitrogen fixation. Involved in electron transfer to nitrogenase. The polypeptide is Ion-translocating oxidoreductase complex subunit A (Rhodobacter capsulatus (Rhodopseudomonas capsulata)).